The primary structure comprises 453 residues: GTPase Der (453 aa).

EngA-type G domains lie at 4–169 (PIVA…PPAD) and 178–353 (IGVA…EQHR). Residues 10–17 (GRPNVGKS), 57–61 (DTGGL), 120–123 (NKCE), 184–191 (GRPNVGKS), 231–235 (DTAGI), and 296–299 (NKWD) contribute to the GTP site. In terms of domain architecture, KH-like spans 354-439 (RRVGTSVINE…PIRLFWRGKK (86 aa)).

This sequence belongs to the TRAFAC class TrmE-Era-EngA-EngB-Septin-like GTPase superfamily. EngA (Der) GTPase family. In terms of assembly, associates with the 50S ribosomal subunit.

In terms of biological role, GTPase that plays an essential role in the late steps of ribosome biogenesis. This is GTPase Der from Synechococcus sp. (strain ATCC 27144 / PCC 6301 / SAUG 1402/1) (Anacystis nidulans).